Reading from the N-terminus, the 229-residue chain is MQRETVWLVEDEQGIADTLVYMLQQEGFAVEVFERGLPVLDKARKQVPDVMILDVGLPDISGFELCRQLLALHPALPVLFLTARSEEVDRLLGLEIGADDYVAKPFSPREVCARVRTLLRRVKKFSTPSPVIRIGHFELNEPAAQISWFDTPLALTRYEFLLLKTLLKSPGRVWSRQQLMDSVWEDAQDTYDRTVDTHIKTLRAKLRAINPDLSPINTHRGMGYSLRGL.

One can recognise a Response regulatory domain in the interval 5–119 (TVWLVEDEQG…EVCARVRTLL (115 aa)). Aspartate 54 bears the 4-aspartylphosphate mark. The ompR/PhoB-type DNA-binding region spans 129 to 228 (SPVIRIGHFE…HRGMGYSLRG (100 aa)).

Post-translationally, phosphorylated by CreC.

It localises to the cytoplasm. Member of the two-component regulatory system CreC/CreB involved in catabolic regulation. The chain is Transcriptional regulatory protein CreB (creB) from Escherichia coli (strain K12).